The primary structure comprises 699 residues: Polyribonucleotide nucleotidyltransferase (699 aa).

Mg(2+) is bound by residues Asp-485 and Asp-491. The 60-residue stretch at 552–611 (PRITTIKINPEKIRDVIGKGGAVIRALTEETGTTIELEDDGTVRIASSNGEATKEAIRRI) folds into the KH domain. The region spanning 621–689 (GRIYNGKVIR…RQGRVRLSIK (69 aa)) is the S1 motif domain.

It belongs to the polyribonucleotide nucleotidyltransferase family. Component of the RNA degradosome, which is a multiprotein complex involved in RNA processing and mRNA degradation. Requires Mg(2+) as cofactor.

It localises to the cytoplasm. It catalyses the reaction RNA(n+1) + phosphate = RNA(n) + a ribonucleoside 5'-diphosphate. Involved in mRNA degradation. Catalyzes the phosphorolysis of single-stranded polyribonucleotides processively in the 3'- to 5'-direction. This chain is Polyribonucleotide nucleotidyltransferase, found in Shewanella sp. (strain W3-18-1).